A 175-amino-acid polypeptide reads, in one-letter code: ATP synthase subunit d, mitochondrial (175 aa).

Ser-2 carries the N-acetylserine modification.

This sequence belongs to the ATPase d subunit family.

It is found in the mitochondrion inner membrane. In terms of biological role, mitochondrial membrane ATP synthase (F(1)F(0) ATP synthase or Complex V) produces ATP from ADP in the presence of a proton gradient across the membrane which is generated by electron transport complexes of the respiratory chain. F-type ATPases consist of two structural domains, F(1) - containing the extramembraneous catalytic core, and F(0) - containing the membrane proton channel, linked together by a central stalk and a peripheral stalk. During catalysis, ATP synthesis in the catalytic domain of F(1) is coupled via a rotary mechanism of the central stalk subunits to proton translocation. Part of the complex F(0) domain and the peripheric stalk, which acts as a stator to hold the catalytic alpha(3)beta(3) subcomplex and subunit a/ATP6 static relative to the rotary elements. In Schizosaccharomyces pombe (strain 972 / ATCC 24843) (Fission yeast), this protein is ATP synthase subunit d, mitochondrial (atp7).